Consider the following 309-residue polypeptide: tRNA uridine(34) hydroxylase (309 aa).

One can recognise a Rhodanese domain in the interval S130 to S224. C184 (cysteine persulfide intermediate) is an active-site residue.

This sequence belongs to the TrhO family.

It carries out the reaction uridine(34) in tRNA + AH2 + O2 = 5-hydroxyuridine(34) in tRNA + A + H2O. Functionally, catalyzes oxygen-dependent 5-hydroxyuridine (ho5U) modification at position 34 in tRNAs. This is tRNA uridine(34) hydroxylase from Rhizobium leguminosarum bv. trifolii (strain WSM2304).